A 122-amino-acid polypeptide reads, in one-letter code: Basic phospholipase A2 homolog (122 aa).

7 disulfides stabilise this stretch: Cys-26–Cys-115, Cys-28–Cys-44, Cys-43–Cys-95, Cys-49–Cys-122, Cys-50–Cys-88, Cys-57–Cys-81, and Cys-75–Cys-86. Positions 105–117 (KRYMTYPNILCSS) are important for membrane-damaging activities in eukaryotes and bacteria; heparin-binding.

This sequence belongs to the phospholipase A2 family. Group II subfamily. N49 sub-subfamily. Expressed by the venom gland.

Its subcellular location is the secreted. This is Basic phospholipase A2 homolog from Gloydius halys (Chinese water mocassin).